A 276-amino-acid chain; its full sequence is Large ribosomal subunit protein uL2 (276 aa).

Residues 219–276 (TVRGSAMNPNDHPHGGGEGRSPIGRPSPVTPWGKPALGYKTRKKNKHSDKFIVTGRKR) form a disordered region.

It belongs to the universal ribosomal protein uL2 family. In terms of assembly, part of the 50S ribosomal subunit. Forms a bridge to the 30S subunit in the 70S ribosome.

Functionally, one of the primary rRNA binding proteins. Required for association of the 30S and 50S subunits to form the 70S ribosome, for tRNA binding and peptide bond formation. It has been suggested to have peptidyltransferase activity; this is somewhat controversial. Makes several contacts with the 16S rRNA in the 70S ribosome. This chain is Large ribosomal subunit protein uL2, found in Alkaliphilus metalliredigens (strain QYMF).